A 99-amino-acid chain; its full sequence is Transmembrane protein 14A (99 aa).

3 helical membrane-spanning segments follow: residues 1-21 (MDLIGFGYAALVTIGSVLGYK), 24-44 (GGVPSLIAGLSVGLLAGYGAY), and 79-99 (PAGLVAGLSLMMILRLVLLLL).

This sequence belongs to the TMEM14 family.

Its subcellular location is the mitochondrion membrane. The protein localises to the endoplasmic reticulum membrane. Its function is as follows. Inhibits apoptosis via negative regulation of the mitochondrial outer membrane permeabilization involved in apoptotic signaling pathway. The chain is Transmembrane protein 14A (Tmem14a) from Mus musculus (Mouse).